The sequence spans 212 residues: Protein HP-25 homolog 1 (212 aa).

Residues Met-1–Ala-34 form the signal peptide. Residues Ser-36–Pro-66 form a disordered region. Positions Gly-40 to Leu-53 are enriched in low complexity. One can recognise a Collagen-like domain in the interval Gly-40–Gly-76. The C1q domain maps to Pro-82–Asn-212. Asn-125 carries N-linked (GlcNAc...) asparagine glycosylation.

Its subcellular location is the secreted. This chain is Protein HP-25 homolog 1, found in Bos taurus (Bovine).